A 396-amino-acid polypeptide reads, in one-letter code: Elongation factor Tu (396 aa).

One can recognise a tr-type G domain in the interval 10-206 (KLHVNVGTIG…ALDTHIPNPE (197 aa)). Residues 19-26 (GHVDHGKT) are G1. Residue 19 to 26 (GHVDHGKT) participates in GTP binding. A Mg(2+)-binding site is contributed by threonine 26. The interval 60-64 (GITIS) is G2. The interval 81–84 (DCPG) is G3. GTP-binding positions include 81–85 (DCPGH) and 136–139 (NKAD). A G4 region spans residues 136-139 (NKAD). The interval 174 to 176 (SAL) is G5.

This sequence belongs to the TRAFAC class translation factor GTPase superfamily. Classic translation factor GTPase family. EF-Tu/EF-1A subfamily. As to quaternary structure, monomer.

It is found in the cytoplasm. It catalyses the reaction GTP + H2O = GDP + phosphate + H(+). In terms of biological role, GTP hydrolase that promotes the GTP-dependent binding of aminoacyl-tRNA to the A-site of ribosomes during protein biosynthesis. The polypeptide is Elongation factor Tu (Xylella fastidiosa (strain 9a5c)).